The primary structure comprises 460 residues: Bifunctional protein GlmU (460 aa).

Residues 1–229 (MTNYAIILAA…FNESLGVNDR (229 aa)) are pyrophosphorylase. UDP-N-acetyl-alpha-D-glucosamine-binding positions include 8–11 (LAAG), Lys-22, Gln-72, and 77–78 (GT). Asp-102 serves as a coordination point for Mg(2+). The UDP-N-acetyl-alpha-D-glucosamine site is built by Gly-139, Glu-154, Asn-169, and Asn-227. Asn-227 serves as a coordination point for Mg(2+). The interval 230 to 250 (VALAIAETVMRQRITQKHMVN) is linker. Residues 251–460 (GVTFQNPETV…RLAHHPSRSK (210 aa)) are N-acetyltransferase. Residues Arg-332 and Lys-350 each coordinate UDP-N-acetyl-alpha-D-glucosamine. The active-site Proton acceptor is the His-362. UDP-N-acetyl-alpha-D-glucosamine is bound by residues Tyr-365 and Asn-376. Residues Ala-379, 385 to 386 (NY), Ser-404, Ala-422, and Arg-439 contribute to the acetyl-CoA site.

The protein in the N-terminal section; belongs to the N-acetylglucosamine-1-phosphate uridyltransferase family. In the C-terminal section; belongs to the transferase hexapeptide repeat family. Homotrimer. Mg(2+) serves as cofactor.

It is found in the cytoplasm. The catalysed reaction is alpha-D-glucosamine 1-phosphate + acetyl-CoA = N-acetyl-alpha-D-glucosamine 1-phosphate + CoA + H(+). The enzyme catalyses N-acetyl-alpha-D-glucosamine 1-phosphate + UTP + H(+) = UDP-N-acetyl-alpha-D-glucosamine + diphosphate. It functions in the pathway nucleotide-sugar biosynthesis; UDP-N-acetyl-alpha-D-glucosamine biosynthesis; N-acetyl-alpha-D-glucosamine 1-phosphate from alpha-D-glucosamine 6-phosphate (route II): step 2/2. It participates in nucleotide-sugar biosynthesis; UDP-N-acetyl-alpha-D-glucosamine biosynthesis; UDP-N-acetyl-alpha-D-glucosamine from N-acetyl-alpha-D-glucosamine 1-phosphate: step 1/1. The protein operates within bacterial outer membrane biogenesis; LPS lipid A biosynthesis. Catalyzes the last two sequential reactions in the de novo biosynthetic pathway for UDP-N-acetylglucosamine (UDP-GlcNAc). The C-terminal domain catalyzes the transfer of acetyl group from acetyl coenzyme A to glucosamine-1-phosphate (GlcN-1-P) to produce N-acetylglucosamine-1-phosphate (GlcNAc-1-P), which is converted into UDP-GlcNAc by the transfer of uridine 5-monophosphate (from uridine 5-triphosphate), a reaction catalyzed by the N-terminal domain. In Streptococcus pyogenes serotype M1, this protein is Bifunctional protein GlmU.